Consider the following 204-residue polypeptide: Large ribosomal subunit protein uL4 (204 aa).

The segment at 56-79 (VSGTTAKPYGQKRTGRARQGSLRS) is disordered.

Belongs to the universal ribosomal protein uL4 family. In terms of assembly, part of the 50S ribosomal subunit.

One of the primary rRNA binding proteins, this protein initially binds near the 5'-end of the 23S rRNA. It is important during the early stages of 50S assembly. It makes multiple contacts with different domains of the 23S rRNA in the assembled 50S subunit and ribosome. Functionally, forms part of the polypeptide exit tunnel. This Wolbachia pipientis subsp. Culex pipiens (strain wPip) protein is Large ribosomal subunit protein uL4.